Here is a 286-residue protein sequence, read N- to C-terminus: B3 domain-containing protein REM11 (286 aa).

The TF-B3 1 DNA-binding region spans 1 to 70 (MAWNLAIITL…TPMLSLVSTQ (70 aa)). The interval 68 to 114 (STQSTSHKSQKRECSKHSEKESISAVPSKGKKNRKARSNREERRDSS) is disordered. A compositionally biased stretch (basic and acidic residues) spans 78-89 (KRECSKHSEKES). Positions 119–219 (NRFVTFTPED…RAQVCFYGVF (101 aa)) form a DNA-binding region, TF-B3 2.

The protein localises to the nucleus. This is B3 domain-containing protein REM11 (REM11) from Arabidopsis thaliana (Mouse-ear cress).